The sequence spans 394 residues: uncharacterized protein (394 aa).

The F-box domain occupies 7-51; it reads RKVIPNMPDLILRKIFDQYDYPVLCKMERVCRRWTNIINSKFRKE.

This is an uncharacterized protein from Caenorhabditis elegans.